The primary structure comprises 136 residues: Histone H3 (136 aa).

It belongs to the histone H3 family. In terms of assembly, the nucleosome is a histone octamer containing two molecules each of H2A, H2B, H3 and H4 assembled in one H3-H4 heterotetramer and two H2A-H2B heterodimers. The octamer wraps approximately 147 bp of DNA.

Its subcellular location is the nucleomorph. It localises to the chromosome. In terms of biological role, core component of nucleosome. Nucleosomes wrap and compact DNA into chromatin, limiting DNA accessibility to the cellular machineries which require DNA as a template. Histones thereby play a central role in transcription regulation, DNA repair, DNA replication and chromosomal stability. DNA accessibility is regulated via a complex set of post-translational modifications of histones, also called histone code, and nucleosome remodeling. The protein is Histone H3 of Guillardia theta (Cryptophyte).